The sequence spans 817 residues: Leucine--tRNA ligase (817 aa).

The 'HIGH' region motif lies at 42-52; sequence PYPSGRLHMGH. Residues 576–580 carry the 'KMSKS' region motif; sequence KMSKS. Lysine 579 contacts ATP.

The protein belongs to the class-I aminoacyl-tRNA synthetase family.

Its subcellular location is the cytoplasm. It carries out the reaction tRNA(Leu) + L-leucine + ATP = L-leucyl-tRNA(Leu) + AMP + diphosphate. This Halorhodospira halophila (strain DSM 244 / SL1) (Ectothiorhodospira halophila (strain DSM 244 / SL1)) protein is Leucine--tRNA ligase.